Consider the following 186-residue polypeptide: UPF0301 protein CGSHiEE_01530 (186 aa).

It belongs to the UPF0301 (AlgH) family.

This chain is UPF0301 protein CGSHiEE_01530, found in Haemophilus influenzae (strain PittEE).